The following is a 217-amino-acid chain: GTP-binding protein Rit2 (217 aa).

Residues G27–S34, D74–Q78, and N133–D136 contribute to the GTP site.

It belongs to the small GTPase superfamily. Ras family. Interacts with AFDN, the C-terminal domain of RALGDS and RLF, but not with RIN1 and PIK3CA. RLF binds exclusively to the active GTP-bound form. Binds calmodulin. Interacts with PLXNB3.

Its subcellular location is the nucleus. The protein resides in the cell membrane. It catalyses the reaction GTP + H2O = GDP + phosphate + H(+). Alternates between an inactive form bound to GDP and an active form bound to GTP. Functionally, binds and exchanges GTP and GDP. The chain is GTP-binding protein Rit2 (Rit2) from Rattus norvegicus (Rat).